Reading from the N-terminus, the 141-residue chain is Pancreatic progenitor cell differentiation and proliferation factor-like protein (141 aa).

The disordered stretch occupies residues 72-141; the sequence is DQSACGGNGP…GAPKDTNSPQ (70 aa). Low complexity predominate over residues 95 to 105; that stretch reads SLLQQEESQLL. A compositionally biased stretch (polar residues) spans 112–122; the sequence is GTVNRFRNSQT.

The protein belongs to the PPDPF family.

The chain is Pancreatic progenitor cell differentiation and proliferation factor-like protein from Bos taurus (Bovine).